A 216-amino-acid chain; its full sequence is Protein-L-isoaspartate O-methyltransferase (216 aa).

The active site involves serine 62.

Belongs to the methyltransferase superfamily. L-isoaspartyl/D-aspartyl protein methyltransferase family.

It is found in the cytoplasm. It catalyses the reaction [protein]-L-isoaspartate + S-adenosyl-L-methionine = [protein]-L-isoaspartate alpha-methyl ester + S-adenosyl-L-homocysteine. In terms of biological role, catalyzes the methyl esterification of L-isoaspartyl residues in peptides and proteins that result from spontaneous decomposition of normal L-aspartyl and L-asparaginyl residues. It plays a role in the repair and/or degradation of damaged proteins. This Methanospirillum hungatei JF-1 (strain ATCC 27890 / DSM 864 / NBRC 100397 / JF-1) protein is Protein-L-isoaspartate O-methyltransferase.